Consider the following 573-residue polypeptide: Glutamate--tRNA ligase (573 aa).

The 'HIGH' region signature appears at 106–116 (PNPDGAFHLGN).

Belongs to the class-I aminoacyl-tRNA synthetase family. Glutamate--tRNA ligase type 2 subfamily.

It is found in the cytoplasm. It carries out the reaction tRNA(Glu) + L-glutamate + ATP = L-glutamyl-tRNA(Glu) + AMP + diphosphate. In terms of biological role, catalyzes the attachment of glutamate to tRNA(Glu) in a two-step reaction: glutamate is first activated by ATP to form Glu-AMP and then transferred to the acceptor end of tRNA(Glu). The sequence is that of Glutamate--tRNA ligase from Thermococcus onnurineus (strain NA1).